Consider the following 529-residue polypeptide: Bifunctional purine biosynthesis protein PurH (529 aa).

The 148-residue stretch at 1–148 folds into the MGS-like domain; it reads MQQRRPIRRA…KNHKDVAIVV (148 aa).

It belongs to the PurH family.

The enzyme catalyses (6R)-10-formyltetrahydrofolate + 5-amino-1-(5-phospho-beta-D-ribosyl)imidazole-4-carboxamide = 5-formamido-1-(5-phospho-D-ribosyl)imidazole-4-carboxamide + (6S)-5,6,7,8-tetrahydrofolate. The catalysed reaction is IMP + H2O = 5-formamido-1-(5-phospho-D-ribosyl)imidazole-4-carboxamide. It functions in the pathway purine metabolism; IMP biosynthesis via de novo pathway; 5-formamido-1-(5-phospho-D-ribosyl)imidazole-4-carboxamide from 5-amino-1-(5-phospho-D-ribosyl)imidazole-4-carboxamide (10-formyl THF route): step 1/1. The protein operates within purine metabolism; IMP biosynthesis via de novo pathway; IMP from 5-formamido-1-(5-phospho-D-ribosyl)imidazole-4-carboxamide: step 1/1. This chain is Bifunctional purine biosynthesis protein PurH, found in Pectobacterium carotovorum subsp. carotovorum (strain PC1).